A 632-amino-acid polypeptide reads, in one-letter code: Threonine--tRNA ligase (632 aa).

The 61-residue stretch at 1 to 61 (MPIVTLPDGS…EHDAEVSILT (61 aa)) folds into the TGS domain. A catalytic region spans residues 242–533 (DHRKLARKLD…LIEHYAGSMP (292 aa)). Residues Cys333, His384, and His510 each contribute to the Zn(2+) site.

It belongs to the class-II aminoacyl-tRNA synthetase family. In terms of assembly, homodimer. Requires Zn(2+) as cofactor.

The protein resides in the cytoplasm. The enzyme catalyses tRNA(Thr) + L-threonine + ATP = L-threonyl-tRNA(Thr) + AMP + diphosphate + H(+). In terms of biological role, catalyzes the attachment of threonine to tRNA(Thr) in a two-step reaction: L-threonine is first activated by ATP to form Thr-AMP and then transferred to the acceptor end of tRNA(Thr). Also edits incorrectly charged L-seryl-tRNA(Thr). This is Threonine--tRNA ligase from Chromohalobacter salexigens (strain ATCC BAA-138 / DSM 3043 / CIP 106854 / NCIMB 13768 / 1H11).